A 617-amino-acid chain; its full sequence is KIF-binding protein (617 aa).

The interval 48–83 (ALLGPAPEDDDERAADDGPVDQALGAGEPRDAEGPG) is disordered. At serine 174 the chain carries Phosphoserine.

The protein belongs to the KIF-binding protein family. Interacts with KIF1B; positively regulates KIF1B microtubule motor activity. Interacts with STMN2.

It is found in the cytoplasm. Its subcellular location is the cytoskeleton. In terms of biological role, activator of KIF1B plus-end-directed microtubule motor activity. Required for organization of axonal microtubules, and axonal outgrowth and maintenance during peripheral and central nervous system development. This is KIF-binding protein (Kifbp) from Rattus norvegicus (Rat).